A 469-amino-acid polypeptide reads, in one-letter code: tRNA-2-methylthio-N(6)-dimethylallyladenosine synthase (469 aa).

An MTTase N-terminal domain is found at 27–142 (KKVYIRTFGC…LPQMLAQRAR (116 aa)). [4Fe-4S] cluster-binding residues include cysteine 36, cysteine 73, cysteine 105, cysteine 179, cysteine 183, and cysteine 186. One can recognise a Radical SAM core domain in the interval 165-398 (KVDGAAAFVS…QATIEDNVRR (234 aa)). Positions 401–467 (ERRVGTVQRV…PHSLRGEPVL (67 aa)) constitute a TRAM domain.

It belongs to the methylthiotransferase family. MiaB subfamily. As to quaternary structure, monomer. [4Fe-4S] cluster serves as cofactor.

The protein resides in the cytoplasm. The enzyme catalyses N(6)-dimethylallyladenosine(37) in tRNA + (sulfur carrier)-SH + AH2 + 2 S-adenosyl-L-methionine = 2-methylsulfanyl-N(6)-dimethylallyladenosine(37) in tRNA + (sulfur carrier)-H + 5'-deoxyadenosine + L-methionine + A + S-adenosyl-L-homocysteine + 2 H(+). Functionally, catalyzes the methylthiolation of N6-(dimethylallyl)adenosine (i(6)A), leading to the formation of 2-methylthio-N6-(dimethylallyl)adenosine (ms(2)i(6)A) at position 37 in tRNAs that read codons beginning with uridine. This is tRNA-2-methylthio-N(6)-dimethylallyladenosine synthase from Leptothrix cholodnii (strain ATCC 51168 / LMG 8142 / SP-6) (Leptothrix discophora (strain SP-6)).